The following is a 379-amino-acid chain: Homoserine O-succinyltransferase (379 aa).

The region spanning 51–360 is the AB hydrolase-1 domain; sequence NAVLICHALS…DAPQGHDAFL (310 aa). Catalysis depends on serine 157, which acts as the Nucleophile. Arginine 227 lines the substrate pocket. Catalysis depends on residues aspartate 323 and histidine 356. Residue aspartate 357 participates in substrate binding.

It belongs to the AB hydrolase superfamily. MetX family. In terms of assembly, homodimer.

Its subcellular location is the cytoplasm. The enzyme catalyses L-homoserine + succinyl-CoA = O-succinyl-L-homoserine + CoA. It functions in the pathway amino-acid biosynthesis; L-methionine biosynthesis via de novo pathway; O-succinyl-L-homoserine from L-homoserine: step 1/1. Transfers a succinyl group from succinyl-CoA to L-homoserine, forming succinyl-L-homoserine. This chain is Homoserine O-succinyltransferase, found in Pseudomonas fluorescens (strain Pf0-1).